The chain runs to 280 residues: Probable aquaporin PIP2-8 (280 aa).

The tract at residues Met-1–Pro-21 is disordered. The next 2 membrane-spanning stretches (helical) occupy residues Ala-36–Ile-56 and Leu-70–Gly-92. The NPA 1 motif lies at Asn-96–Ala-98. The next 3 membrane-spanning stretches (helical) occupy residues Arg-113–Met-135, Ser-156–Phe-176, and Val-192–Ile-212. Residues Asn-218–Ala-220 carry the NPA 2 motif. The helical transmembrane segment at Ala-236–Ile-256 threads the bilayer.

The protein belongs to the MIP/aquaporin (TC 1.A.8) family. PIP (TC 1.A.8.11) subfamily. In terms of tissue distribution, expressed in leaves and at lower levels in roots.

The protein localises to the cell membrane. Functionally, aquaporins facilitate the transport of water and small neutral solutes across cell membranes. This chain is Probable aquaporin PIP2-8 (PIP2-8), found in Oryza sativa subsp. japonica (Rice).